The following is an 863-amino-acid chain: Scm-like with four MBT domains protein 1 (863 aa).

MBT repeat units lie at residues 20-120 (FSWE…LEAP), 128-232 (SDWS…LQPP), 242-346 (ADWQ…INPP), and 354-451 (FDWA…LSTP). A disordered region spans residues 638–773 (KKKNKRIGRP…SDGENKPPSP (136 aa)). Residues 660–679 (KTSKRRKRRKNIFVHKKKRS) are compositionally biased toward basic residues. The span at 680–691 (SASVDNTPVGSP) shows a compositional bias: polar residues. Residues 696 to 710 (GEDEDDADDGDDDSL) show a composition bias toward acidic residues. 2 positions are modified to phosphoserine: Ser-764 and Ser-772. The region spanning 793–861 (WSVADVVRFI…RIKFAFYEQF (69 aa)) is the SAM domain.

In terms of assembly, interacts with MYOD1. Component of the SLC (SFMBT1-LSD1-CoREST) corepressor complex, which also contains KDM1A/LSD1 and RCOR1/CoREST. Interacts with KDM1A/LSD1 and RCOR1/CoREST. Interacts with MYOD1. Interacts with L3MBTL3. Highly expressed in the testis, low expression was detected in brain, kidney, heart and lung.

It localises to the nucleus. Histone-binding protein, which is part of various corepressor complexes. Mediates the recruitment of corepressor complexes to target genes, followed by chromatin compaction and repression of transcription. Plays a role during myogenesis: required for the maintenance of undifferentiated states of myogenic progenitor cells via interaction with MYOD1. Interaction with MYOD1 leads to the recruitment of associated corepressors and silencing of MYOD1 target genes. Part of the SLC complex in germ cells, where it may play a role during spermatogenesis. The protein is Scm-like with four MBT domains protein 1 (Sfmbt1) of Rattus norvegicus (Rat).